A 514-amino-acid polypeptide reads, in one-letter code: RNA-splicing ligase RtcB homolog (514 aa).

Mn(2+) is bound by residues D128, C131, H236, H268, and H362. Residue 235 to 239 (NHYAE) coordinates GMP. Residues 362 to 363 (HN), 411 to 414 (GGTM), S418, 437 to 440 (HGAG), and K513 contribute to the GMP site. H437 functions as the GMP-histidine intermediate in the catalytic mechanism.

This sequence belongs to the RtcB family. In terms of assembly, catalytic component of the tRNA-splicing ligase complex. It depends on Mn(2+) as a cofactor.

It catalyses the reaction a 3'-end 3'-phospho-ribonucleotide-RNA + a 5'-end dephospho-ribonucleoside-RNA + GTP = a ribonucleotidyl-ribonucleotide-RNA + GMP + diphosphate. The enzyme catalyses a 3'-end 2',3'-cyclophospho-ribonucleotide-RNA + a 5'-end dephospho-ribonucleoside-RNA + GTP + H2O = a ribonucleotidyl-ribonucleotide-RNA + GMP + diphosphate + H(+). Its function is as follows. Catalytic subunit of the tRNA-splicing ligase complex that acts by directly joining spliced tRNA halves to mature-sized tRNAs by incorporating the precursor-derived splice junction phosphate into the mature tRNA as a canonical 3',5'-phosphodiester. May act as an RNA ligase with broad substrate specificity, and may function toward other RNAs. This Ostreococcus lucimarinus (strain CCE9901) protein is RNA-splicing ligase RtcB homolog.